Consider the following 1222-residue polypeptide: Serine/threonine-protein kinase WNK4 (1222 aa).

Positions 1 to 17 (MLAPRNTETGVPMSQTE) are enriched in polar residues. The disordered stretch occupies residues 1-165 (MLAPRNTETG…DTETQAVATS (165 aa)). Over residues 90–101 (AGPTRSPPSSSK) the composition is skewed to low complexity. Serine 95 bears the Phosphoserine mark. Basic and acidic residues predominate over residues 135 to 152 (EPPRVPDAAARERRREQE). Residues lysine 154 and lysine 172 each participate in a glycyl lysine isopeptide (Lys-Gly) (interchain with G-Cter in ubiquitin) cross-link. The Protein kinase domain occupies 171–429 (LKFDIEIGRG…IQDLLAHAFF (259 aa)). Residue serine 181 participates in ATP binding. Glycyl lysine isopeptide (Lys-Gly) (interchain with G-Cter in ubiquitin) cross-links involve residues lysine 183, lysine 223, and lysine 238. Residues 251–254 (TELM) and lysine 301 each bind ATP. The active-site Proton acceptor is the aspartate 318. A Glycyl lysine isopeptide (Lys-Gly) (interchain with G-Cter in ubiquitin) cross-link involves residue lysine 325. Residues serine 328 and serine 332 each carry the phosphoserine; by autocatalysis modification. Residues lysine 384, lysine 390, lysine 447, and lysine 451 each participate in a glycyl lysine isopeptide (Lys-Gly) (interchain with G-Cter in ubiquitin) cross-link. The tract at residues 525–562 (RELEVLPPDSGPPPATVSLAPGPPSAFPPEPEEPEADQ) is disordered. Residues 533 to 553 (DSGPPPATVSLAPGPPSAFPP) are compositionally biased toward pro residues. The interval 554 to 564 (EPEEPEADQHQ) is interaction with KLHL3. A Phosphoserine modification is found at serine 572. Disordered stretches follow at residues 626–659 (RSGPGSDFSPGDSYASDAASGLSDMGEGGQMRKN), 747–809 (DAGP…GAPF), 877–896 (SYPQDPLSPTSLPVCPSPPS), and 927–976 (SPGL…AQPL). 4 stretches are compositionally biased toward low complexity: residues 627–638 (SGPGSDFSPGDS), 757–769 (ALSPQEEPAALPA), 793–807 (STSPSSPGTPLSPGA), and 877–890 (SYPQDPLSPTSLPV). Residues 935 to 944 (PPAPPGPLPS) are compositionally biased toward pro residues. Residues 953–963 (DQESLSAQTAE) are compositionally biased toward polar residues. Lysine 990 is covalently cross-linked (Glycyl lysine isopeptide (Lys-Gly) (interchain with G-Cter in ubiquitin)). An RFXV motif motif is present at residues 996–999 (RFQV). A disordered region spans residues 1000-1087 (TSSKEPAEPP…SSPILSHPSP (88 aa)). Phosphoserine is present on serine 1014. Residues 1014-1032 (SPTLSRSLKLPSPPLTSES) show a composition bias toward low complexity. Residues 1044-1056 (ETREALAESDRAA) are compositionally biased toward basic and acidic residues. Glycyl lysine isopeptide (Lys-Gly) (interchain with G-Cter in ubiquitin) cross-links involve residues lysine 1123, lysine 1136, and lysine 1137. Residues 1166–1222 (RRLSKGSFPTSRRNSLQRSDLPGPGIMRRNSLSGSSTGSQEQRASKGVTFAGDIGRM) are disordered. Composition is skewed to polar residues over residues 1172–1183 (SFPTSRRNSLQR) and 1195–1207 (NSLSGSSTGSQEQ). Serine 1196 carries the phosphoserine modification.

Belongs to the protein kinase superfamily. Ser/Thr protein kinase family. WNK subfamily. As to quaternary structure, interacts with the C-terminal region of KCNJ1. Interacts with WNK1 and WNK3. Interacts with KLHL3. The cofactor is Mg(2+). In terms of processing, autophosphorylated at Ser-328 and Ser-332, promoting its activation. Phosphorylated by WNK1 and WNK3. Phosphorylated at Ser-572 in a MAP3K15/ASK3-dependent process in response to osmotic stress or hypotonic low-chloride stimulation. Ubiquitinated by the BCR(KLHL3) complex, leading to its degradation. Also ubiquitinated by the BCR(KLHL2) complex. In terms of tissue distribution, locates to the distal convoluted tubule, the medullary collecting duct and the cortical collecting duct of the kidney. Expressed in pancreatic duct.

It is found in the cell junction. It localises to the tight junction. The enzyme catalyses L-seryl-[protein] + ATP = O-phospho-L-seryl-[protein] + ADP + H(+). It carries out the reaction L-threonyl-[protein] + ATP = O-phospho-L-threonyl-[protein] + ADP + H(+). Its activity is regulated as follows. Activation requires autophosphorylation of Ser-328 and Ser-332. Autophosphorylation and subsequent activation is inhibited by increases in intracellular ionic strength: Cl(-) potently inhibits WNK4 kinase activity via direct binding. Also inhibited by K(+) ions. In terms of biological role, serine/threonine-protein kinase component of the WNK4-SPAK/OSR1 kinase cascade, which acts as a key regulator of ion transport in the distal nephron and blood pressure. The WNK4-SPAK/OSR1 kinase cascade is composed of WNK4, which mediates phosphorylation and activation of downstream kinases OXSR1/OSR1 and STK39/SPAK. Following activation, OXSR1/OSR1 and STK39/SPAK catalyze phosphorylation of ion cotransporters, such as SLC12A1/NKCC2, SLC12A2/NKCC1, SLC12A3/NCC, SLC12A5/KCC2 or SLC12A6/KCC3, regulating their activity. Acts as a molecular switch that regulates the balance between renal salt reabsorption and K(+) secretion by modulating the activities of renal transporters and channels, including the Na-Cl cotransporter SLC12A3/NCC and the K(+) channel, KCNJ1/ROMK. Regulates NaCl reabsorption in the distal nephron by activating the thiazide-sensitive Na-Cl cotransporter SLC12A3/NCC in distal convoluted tubule cells of kidney: activates SLC12A3/NCC in a OXSR1/OSR1- and STK39/SPAK-dependent process. Also acts as a scaffold protein independently of its protein kinase activity: negatively regulates cell membrane localization of various transporters and channels (CFTR, KCNJ1/ROMK, SLC4A4, SLC26A9 and TRPV4) by clathrin-dependent endocytosis. Also inhibits the activity of the epithelial Na(+) channel (ENaC) SCNN1A, SCNN1B, SCNN1D in a inase-independent mechanism. May also phosphorylate NEDD4L. This is Serine/threonine-protein kinase WNK4 from Mus musculus (Mouse).